Here is a 201-residue protein sequence, read N- to C-terminus: UPF0637 protein LCA_0842 (201 aa).

Belongs to the UPF0637 family.

This chain is UPF0637 protein LCA_0842, found in Latilactobacillus sakei subsp. sakei (strain 23K) (Lactobacillus sakei subsp. sakei).